A 103-amino-acid chain; its full sequence is Large ribosomal subunit protein uL24 (103 aa).

It belongs to the universal ribosomal protein uL24 family. Part of the 50S ribosomal subunit.

Functionally, one of two assembly initiator proteins, it binds directly to the 5'-end of the 23S rRNA, where it nucleates assembly of the 50S subunit. In terms of biological role, one of the proteins that surrounds the polypeptide exit tunnel on the outside of the subunit. The sequence is that of Large ribosomal subunit protein uL24 from Ruthia magnifica subsp. Calyptogena magnifica.